The following is a 318-amino-acid chain: ADP-L-glycero-D-manno-heptose-6-epimerase (318 aa).

NADP(+) is bound by residues F10–I11, D31–D32, K38, K53, and E79–S83. The active-site Proton acceptor is Y144. Residue K148 participates in NADP(+) binding. N173 provides a ligand contact to substrate. The NADP(+) site is built by V174 and K182. The Proton acceptor role is filled by K182. Substrate-binding positions include S184, H191, F205–C208, R218, and Y282.

Belongs to the NAD(P)-dependent epimerase/dehydratase family. HldD subfamily. In terms of assembly, homopentamer. NADP(+) serves as cofactor.

The enzyme catalyses ADP-D-glycero-beta-D-manno-heptose = ADP-L-glycero-beta-D-manno-heptose. The protein operates within nucleotide-sugar biosynthesis; ADP-L-glycero-beta-D-manno-heptose biosynthesis; ADP-L-glycero-beta-D-manno-heptose from D-glycero-beta-D-manno-heptose 7-phosphate: step 4/4. In terms of biological role, catalyzes the interconversion between ADP-D-glycero-beta-D-manno-heptose and ADP-L-glycero-beta-D-manno-heptose via an epimerization at carbon 6 of the heptose. This Aeromonas hydrophila subsp. hydrophila (strain ATCC 7966 / DSM 30187 / BCRC 13018 / CCUG 14551 / JCM 1027 / KCTC 2358 / NCIMB 9240 / NCTC 8049) protein is ADP-L-glycero-D-manno-heptose-6-epimerase.